A 357-amino-acid chain; its full sequence is tRNA N6-adenosine threonylcarbamoyltransferase (357 aa).

Residues His-119 and His-123 each coordinate Fe cation. Substrate contacts are provided by residues 141 to 145, Asp-174, Gly-187, and Asn-284; that span reads LISGG. Asp-312 lines the Fe cation pocket.

Belongs to the KAE1 / TsaD family. The cofactor is Fe(2+).

It localises to the cytoplasm. The catalysed reaction is L-threonylcarbamoyladenylate + adenosine(37) in tRNA = N(6)-L-threonylcarbamoyladenosine(37) in tRNA + AMP + H(+). Its function is as follows. Required for the formation of a threonylcarbamoyl group on adenosine at position 37 (t(6)A37) in tRNAs that read codons beginning with adenine. Is involved in the transfer of the threonylcarbamoyl moiety of threonylcarbamoyl-AMP (TC-AMP) to the N6 group of A37, together with TsaE and TsaB. TsaD likely plays a direct catalytic role in this reaction. The sequence is that of tRNA N6-adenosine threonylcarbamoyltransferase from Pelagibacter ubique (strain HTCC1062).